Reading from the N-terminus, the 293-residue chain is Small ribosomal subunit biogenesis GTPase RsgA (293 aa).

The CP-type G domain occupies 63–223; sequence QNELVRPPVA…VADTPGFSAL (161 aa). GTP is bound by residues 112 to 115 and 166 to 174; these read SKID and GQSGVGKSS. The Zn(2+) site is built by Cys-247, Cys-252, His-254, and Cys-260.

The protein belongs to the TRAFAC class YlqF/YawG GTPase family. RsgA subfamily. In terms of assembly, monomer. Associates with 30S ribosomal subunit, binds 16S rRNA. Zn(2+) is required as a cofactor.

It is found in the cytoplasm. In terms of biological role, one of several proteins that assist in the late maturation steps of the functional core of the 30S ribosomal subunit. Helps release RbfA from mature subunits. May play a role in the assembly of ribosomal proteins into the subunit. Circularly permuted GTPase that catalyzes slow GTP hydrolysis, GTPase activity is stimulated by the 30S ribosomal subunit. In Geobacillus thermodenitrificans (strain NG80-2), this protein is Small ribosomal subunit biogenesis GTPase RsgA.